The chain runs to 275 residues: MLDIFKAIILGIIEGVTEFLPISSTGHLYLADYIIKLDQPTSFINMFMVVIQLGAILSVIVIYFNKLNPFAPSKSKREKGQTWQIWFKVIAAVLPSIIIGLPLNDWLEENMTSWQVISATLIIYGILFIVLENYYAKRQPSLTDLNKMSNKTALLIGCFQVLSMIPGTSRSGATILGAMLIGSSRYVATEFSFFLAIPTMFGASLLKLVKFFKAGHVFVGNQLAILLVGMVVSFIVAYLSIKFLLKYVQTHDFKPFGWYRIVLGIIVTICGLVFA.

Helical transmembrane passes span 2-22 (LDIFKAIILGIIEGVTEFLPI), 43-63 (FINMFMVVIQLGAILSVIVIY), 83-103 (WQIWFKVIAAVLPSIIIGLPL), 111-131 (MTSWQVISATLIIYGILFIVL), 161-181 (VLSMIPGTSRSGATILGAMLI), 186-206 (YVATEFSFFLAIPTMFGASLL), 225-245 (ILLVGMVVSFIVAYLSIKFLL), and 255-275 (PFGWYRIVLGIIVTICGLVFA).

This sequence belongs to the UppP family.

It localises to the cell membrane. It carries out the reaction di-trans,octa-cis-undecaprenyl diphosphate + H2O = di-trans,octa-cis-undecaprenyl phosphate + phosphate + H(+). Its function is as follows. Catalyzes the dephosphorylation of undecaprenyl diphosphate (UPP). Confers resistance to bacitracin. This Lactobacillus delbrueckii subsp. bulgaricus (strain ATCC 11842 / DSM 20081 / BCRC 10696 / JCM 1002 / NBRC 13953 / NCIMB 11778 / NCTC 12712 / WDCM 00102 / Lb 14) protein is Undecaprenyl-diphosphatase.